A 185-amino-acid polypeptide reads, in one-letter code: ATP synthase subunit b 2 (185 aa).

A disordered region spans residues 1–23 (MAEGHGDAKGATAHTAADGGHKA). Positions 9 to 18 (KGATAHTAAD) are enriched in low complexity. A helical membrane pass occupies residues 32-51 (TFASQLVSLTIAFVALYLIV).

The protein belongs to the ATPase B chain family. In terms of assembly, F-type ATPases have 2 components, F(1) - the catalytic core - and F(0) - the membrane proton channel. F(1) has five subunits: alpha(3), beta(3), gamma(1), delta(1), epsilon(1). F(0) has three main subunits: a(1), b(2) and c(10-14). The alpha and beta chains form an alternating ring which encloses part of the gamma chain. F(1) is attached to F(0) by a central stalk formed by the gamma and epsilon chains, while a peripheral stalk is formed by the delta and b chains.

The protein resides in the cell inner membrane. Its function is as follows. F(1)F(0) ATP synthase produces ATP from ADP in the presence of a proton or sodium gradient. F-type ATPases consist of two structural domains, F(1) containing the extramembraneous catalytic core and F(0) containing the membrane proton channel, linked together by a central stalk and a peripheral stalk. During catalysis, ATP synthesis in the catalytic domain of F(1) is coupled via a rotary mechanism of the central stalk subunits to proton translocation. Component of the F(0) channel, it forms part of the peripheral stalk, linking F(1) to F(0). The b'-subunit is a diverged and duplicated form of b found in plants and photosynthetic bacteria. The sequence is that of ATP synthase subunit b 2 (atpF2) from Rhodopseudomonas palustris (strain HaA2).